A 367-amino-acid chain; its full sequence is RNA-binding protein 48 (367 aa).

The region spanning 46-124 is the RRM domain; sequence QYLLIQGVPA…GLLHVCYAPE (79 aa). Disordered stretches follow at residues 217–243, 280–302, and 343–367; these read PVDRAPDSSKDGRNHHKTMGHYNHNDS, QLQERKRRREDDRKLGTFLQTNP, and SVPKPPEDKPEDVHTSHPLKQRRRI. The span at 347 to 357 shows a compositional bias: basic and acidic residues; it reads PPEDKPEDVHT.

This sequence belongs to the RBM48 family. Component of the minor spliceosome. Within this complex, interacts with ARMC7 and PRPF8/PRP8.

Its function is as follows. As a component of the minor spliceosome, involved in the splicing of U12-type introns in pre-mRNAs. This Homo sapiens (Human) protein is RNA-binding protein 48 (RBM48).